The sequence spans 202 residues: Small ribosomal subunit protein uS4c (202 aa).

The S4 RNA-binding domain maps to 90 to 152 (MRLDNLIFRL…AASKSLVNTY (63 aa)).

The protein belongs to the universal ribosomal protein uS4 family. In terms of assembly, part of the 30S ribosomal subunit. Contacts protein S5. The interaction surface between S4 and S5 is involved in control of translational fidelity.

Its subcellular location is the plastid. The protein resides in the chloroplast. In terms of biological role, one of the primary rRNA binding proteins, it binds directly to 16S rRNA where it nucleates assembly of the body of the 30S subunit. Functionally, with S5 and S12 plays an important role in translational accuracy. This Emiliania huxleyi (Coccolithophore) protein is Small ribosomal subunit protein uS4c (rps4).